Here is a 438-residue protein sequence, read N- to C-terminus: V-type ATP synthase beta chain (438 aa).

The protein belongs to the ATPase alpha/beta chains family.

Functionally, produces ATP from ADP in the presence of a proton gradient across the membrane. The V-type beta chain is a regulatory subunit. The polypeptide is V-type ATP synthase beta chain (atpB) (Chlamydia pneumoniae (Chlamydophila pneumoniae)).